The sequence spans 160 residues: Large ribosomal subunit protein uL16 (160 aa).

A disordered region spans residues 138–160; it reads KNLENSSQENTKDSKKSQEEVKQ. The segment covering 147-160 has biased composition (basic and acidic residues); it reads NTKDSKKSQEEVKQ.

The protein belongs to the universal ribosomal protein uL16 family. As to quaternary structure, part of the 50S ribosomal subunit.

Functionally, binds 23S rRNA and is also seen to make contacts with the A and possibly P site tRNAs. This is Large ribosomal subunit protein uL16 from Prochlorococcus marinus (strain AS9601).